Here is a 144-residue protein sequence, read N- to C-terminus: Maximins 8/H7 (144 aa).

Positions 1–18 are cleaved as a signal peptide; that stretch reads MKFKYIVAVSFLIASAYA. Residues 19–43 constitute a propeptide that is removed on maturation; it reads RSEENDEQSLSQRDVLEEESLREIR. N70 bears the Asparagine amide mark. The propeptide occupies 74 to 123; sequence TAEDHEVMKRLEAVMRDLDSLDYPEEASERETRGFNQEEIANLFTKKEKR. L143 bears the Leucine amide mark.

This sequence belongs to the bombinin family. As to expression, expressed by the skin glands.

The protein localises to the secreted. Maximin-8 shows antimicrobial activity against bacteria and against the fungus C.albicans. It has little hemolytic activity. Functionally, maximin-H7 shows antimicrobial activity against bacteria and against the fungus C.albicans. Shows strong hemolytic activity. The sequence is that of Maximins 8/H7 from Bombina maxima (Giant fire-bellied toad).